Consider the following 533-residue polypeptide: Calcium-dependent protein kinase 8 (533 aa).

The segment at 1-21 is disordered; sequence MGNCCASPGSETGSKKGKPKI. Residue G2 is the site of N-myristoyl glycine attachment. The Protein kinase domain occupies 57–315; the sequence is YDLGREVGRG…AAQVLEHSWI (259 aa). Residues 63–71 and K86 contribute to the ATP site; that span reads VGRGEFGIT. The active-site Proton acceptor is the D181. Residue S221 is modified to Phosphoserine. Residues 321–351 are autoinhibitory domain; sequence APNVSLGETVKARLKQFSVMNKLKKRALRVI. EF-hand domains are found at residues 358 to 394, 395 to 430, 431 to 466, and 467 to 502; these read EEVA…GQQQ, IPDT…LKKM, ANDE…EVDT, and NSEE…GTDW. 18 residues coordinate Ca(2+): D371, T375, K377, E382, D408, D410, D412, T414, E419, D444, N446, S448, Y450, E455, D480, D482, D484, and R486. S488 carries the phosphoserine modification. Residue E491 coordinates Ca(2+). S526 carries the phosphoserine modification.

Belongs to the protein kinase superfamily. Ser/Thr protein kinase family. CDPK subfamily.

It is found in the cell membrane. The catalysed reaction is L-seryl-[protein] + ATP = O-phospho-L-seryl-[protein] + ADP + H(+). It catalyses the reaction L-threonyl-[protein] + ATP = O-phospho-L-threonyl-[protein] + ADP + H(+). With respect to regulation, activated by calcium. Autophosphorylation may play an important role in the regulation of the kinase activity. In terms of biological role, may play a role in signal transduction pathways that involve calcium as a second messenger. In Arabidopsis thaliana (Mouse-ear cress), this protein is Calcium-dependent protein kinase 8 (CPK8).